A 1161-amino-acid chain; its full sequence is DNA-directed RNA polymerase subunit beta (1161 aa).

Belongs to the RNA polymerase beta chain family. In terms of assembly, the RNAP catalytic core consists of 2 alpha, 1 beta, 1 beta' and 1 omega subunit. When a sigma factor is associated with the core the holoenzyme is formed, which can initiate transcription. The RNAP complex including the principal sigma factor HrdB also interacts with RNA-binding protein RbpA.

It catalyses the reaction RNA(n) + a ribonucleoside 5'-triphosphate = RNA(n+1) + diphosphate. DNA-dependent RNA polymerase catalyzes the transcription of DNA into RNA using the four ribonucleoside triphosphates as substrates. This Streptomyces coelicolor (strain ATCC BAA-471 / A3(2) / M145) protein is DNA-directed RNA polymerase subunit beta.